Here is a 471-residue protein sequence, read N- to C-terminus: Kynurenine 3-monooxygenase (471 aa).

FAD-binding positions include valine 19, 37–40 (YESR), and alanine 57. The L-kynurenine site is built by arginine 85 and tyrosine 99. FAD-binding positions include arginine 111, leucine 136, threonine 172, aspartate 304, and 317–318 (MN). The L-kynurenine site is built by asparagine 363 and tyrosine 398. 2 helical membrane-spanning segments follow: residues 385–404 (CLHT…VTFS) and 425–445 (ALFF…TGPT).

Belongs to the aromatic-ring hydroxylase family. KMO subfamily. FAD serves as cofactor.

It localises to the mitochondrion outer membrane. It carries out the reaction L-kynurenine + NADPH + O2 + H(+) = 3-hydroxy-L-kynurenine + NADP(+) + H2O. Its pathway is cofactor biosynthesis; NAD(+) biosynthesis; quinolinate from L-kynurenine: step 1/3. Its function is as follows. Catalyzes the hydroxylation of L-kynurenine (L-Kyn) to form 3-hydroxy-L-kynurenine (L-3OHKyn). Required for synthesis of quinolinic acid, a neurotoxic NMDA receptor antagonist and potential endogenous inhibitor of NMDA receptor signaling in axonal targeting, synaptogenesis and apoptosis during brain development. Quinolinic acid may also affect NMDA receptor signaling in pancreatic beta cells, osteoblasts, myocardial cells, and the gastrointestinal tract. The polypeptide is Kynurenine 3-monooxygenase (Sus scrofa (Pig)).